Consider the following 281-residue polypeptide: Pantothenate synthetase (281 aa).

30–37 is an ATP binding site; the sequence is MGYLHEGH. Histidine 37 functions as the Proton donor in the catalytic mechanism. A (R)-pantoate-binding site is contributed by glutamine 61. Beta-alanine is bound at residue glutamine 61. 147–150 serves as a coordination point for ATP; the sequence is GQKD. Glutamine 153 contributes to the (R)-pantoate binding site. ATP is bound by residues valine 176 and 184–187; that span reads MSSR.

Belongs to the pantothenate synthetase family. Homodimer.

The protein localises to the cytoplasm. The enzyme catalyses (R)-pantoate + beta-alanine + ATP = (R)-pantothenate + AMP + diphosphate + H(+). Its pathway is cofactor biosynthesis; (R)-pantothenate biosynthesis; (R)-pantothenate from (R)-pantoate and beta-alanine: step 1/1. Catalyzes the condensation of pantoate with beta-alanine in an ATP-dependent reaction via a pantoyl-adenylate intermediate. The polypeptide is Pantothenate synthetase (Caldicellulosiruptor saccharolyticus (strain ATCC 43494 / DSM 8903 / Tp8T 6331)).